Here is a 245-residue protein sequence, read N- to C-terminus: Uridylate kinase (245 aa).

20–23 (KVSG) is a binding site for ATP. G62 is a UMP binding site. ATP contacts are provided by G63 and R67. UMP contacts are provided by residues D81 and 142–149 (IGSPFFTT). ATP is bound by residues T169, Q170, Y175, and D178.

The protein belongs to the UMP kinase family. In terms of assembly, homohexamer.

The protein localises to the cytoplasm. The enzyme catalyses UMP + ATP = UDP + ADP. Its pathway is pyrimidine metabolism; CTP biosynthesis via de novo pathway; UDP from UMP (UMPK route): step 1/1. With respect to regulation, inhibited by UTP. In terms of biological role, catalyzes the reversible phosphorylation of UMP to UDP. This Anaplasma marginale (strain St. Maries) protein is Uridylate kinase.